The chain runs to 232 residues: Ion-translocating oxidoreductase complex subunit E (232 aa).

6 helical membrane-spanning segments follow: residues 18 to 38, 39 to 59, 69 to 89, 93 to 113, 127 to 147, and 182 to 202; these read GLVQ…ITNA, LGLG…VSLV, IPVF…LINA, GLYL…IIIG, AAFD…VLGA, and PFLL…LIAL.

This sequence belongs to the NqrDE/RnfAE family. The complex is composed of six subunits: RnfA, RnfB, RnfC, RnfD, RnfE and RnfG.

Its subcellular location is the cell inner membrane. Part of a membrane-bound complex that couples electron transfer with translocation of ions across the membrane. The polypeptide is Ion-translocating oxidoreductase complex subunit E (Shewanella baltica (strain OS185)).